We begin with the raw amino-acid sequence, 176 residues long: 3-hydroxydecanoyl-[acyl-carrier-protein] dehydratase (176 aa).

The active site involves H71.

The protein belongs to the thioester dehydratase family. FabA subfamily. Homodimer.

It localises to the cytoplasm. The catalysed reaction is a (3R)-hydroxyacyl-[ACP] = a (2E)-enoyl-[ACP] + H2O. The enzyme catalyses (3R)-hydroxydecanoyl-[ACP] = (2E)-decenoyl-[ACP] + H2O. It catalyses the reaction (2E)-decenoyl-[ACP] = (3Z)-decenoyl-[ACP]. It functions in the pathway lipid metabolism; fatty acid biosynthesis. Functionally, necessary for the introduction of cis unsaturation into fatty acids. Catalyzes the dehydration of (3R)-3-hydroxydecanoyl-ACP to E-(2)-decenoyl-ACP and then its isomerization to Z-(3)-decenoyl-ACP. Can catalyze the dehydratase reaction for beta-hydroxyacyl-ACPs with saturated chain lengths up to 16:0, being most active on intermediate chain length. The sequence is that of 3-hydroxydecanoyl-[acyl-carrier-protein] dehydratase from Rhodopseudomonas palustris (strain BisB18).